Consider the following 1386-residue polypeptide: Restriction of telomere capping protein 1 (1386 aa).

Positions 31–56 are enriched in polar residues; the sequence is LEGNSSASPTPSMNPKQHNKSGTSSS. The segment at 31 to 58 is disordered; it reads LEGNSSASPTPSMNPKQHNKSGTSSSNK. WD repeat units lie at residues 180-227, 234-278, 290-329, and 382-428; these read DHIR…NKPT, SHSD…GGYQ, FHTG…THQN, and NERE…IPKE. Low complexity-rich tracts occupy residues 595-606 and 649-663; these read NPSFSNSVSPPF and GNNN…VSGN. Disordered stretches follow at residues 595–629, 647–691, 844–958, 991–1021, and 1090–1157; these read NPSF…PPKP, EHGN…IQGY, TSTS…SQFG, ASPI…SNHR, and SPNY…SRTE. Polar residues predominate over residues 669–690; it reads LNRNHSQSTQGSNVSLSSSIQG. A compositionally biased stretch (low complexity) spans 859-872; it reads SNNIELSNANNNGS. Composition is skewed to polar residues over residues 884-928, 1006-1016, 1090-1121, and 1134-1145; these read SNLN…GSTR, TTSGSMSPQNK, SPNY…GSSR, and NKTSYAKQSPVS. Residues 1148-1157 are compositionally biased toward basic and acidic residues; that stretch reads LMRDEQSRTE. The stretch at 1171-1212 is one WD 5 repeat; that stretch reads IEETKVTSVNFGKSELTRAITGNNTGSPNTLYKPWKTEYLLK. The RING-type; degenerate zinc-finger motif lies at 1338 to 1381; it reads CIYCDEPCKGLNIVTSLSCGHRGHFGCLREWFIDQENIVCPGGC.

Belongs to the WD repeat RTC1 family.

It localises to the vacuole. In terms of biological role, may be involved in a process influencing telomere capping. This chain is Restriction of telomere capping protein 1 (RTC1), found in Debaryomyces hansenii (strain ATCC 36239 / CBS 767 / BCRC 21394 / JCM 1990 / NBRC 0083 / IGC 2968) (Yeast).